The chain runs to 270 residues: 5'-AMP-activated protein kinase subunit beta-1 (270 aa).

The interval 1-44 (MGNTSSERAALERQAGHKTPRRDSSGGAKDGDRPKILMDSPEDA) is disordered. Glycine 2 is lipidated: N-myristoyl glycine. Threonine 4 carries the post-translational modification Phosphothreonine. Residues serine 5 and serine 6 each carry the phosphoserine modification. Over residues 9–36 (AALERQAGHKTPRRDSSGGAKDGDRPKI) the composition is skewed to basic and acidic residues. A Phosphothreonine modification is found at threonine 19. Phosphoserine; by autocatalysis occurs at positions 24 and 25. Residues serine 40, serine 96, and serine 101 each carry the phosphoserine modification. The interval 68 to 163 (EANDKAPAQA…QVKKTDFEVF (96 aa)) is glycogen-binding domain. Serine 108 is modified (phosphoserine; by autocatalysis). Threonine 148 is modified (phosphothreonine). Serine 182 is modified (phosphoserine). Lysine 201 carries the N6-succinyllysine modification.

Belongs to the 5'-AMP-activated protein kinase beta subunit family. AMPK is a heterotrimer of an alpha catalytic subunit (PRKAA1 or PRKAA2), a beta (PRKAB1 or PRKAB2) and a gamma non-catalytic subunits (PRKAG1, PRKAG2 or PRKAG3). Interacts with FNIP1 and FNIP2. Phosphorylated when associated with the catalytic subunit (PRKAA1 or PRKAA2). Phosphorylated by ULK1; leading to negatively regulate AMPK activity and suggesting the existence of a regulatory feedback loop between ULK1 and AMPK.

Non-catalytic subunit of AMP-activated protein kinase (AMPK), an energy sensor protein kinase that plays a key role in regulating cellular energy metabolism. In response to reduction of intracellular ATP levels, AMPK activates energy-producing pathways and inhibits energy-consuming processes: inhibits protein, carbohydrate and lipid biosynthesis, as well as cell growth and proliferation. AMPK acts via direct phosphorylation of metabolic enzymes, and by longer-term effects via phosphorylation of transcription regulators. Also acts as a regulator of cellular polarity by remodeling the actin cytoskeleton; probably by indirectly activating myosin. Beta non-catalytic subunit acts as a scaffold on which the AMPK complex assembles, via its C-terminus that bridges alpha (PRKAA1 or PRKAA2) and gamma subunits (PRKAG1, PRKAG2 or PRKAG3). This is 5'-AMP-activated protein kinase subunit beta-1 (Prkab1) from Mus musculus (Mouse).